A 144-amino-acid chain; its full sequence is MRILVLHGPNLNLLGKREPEIYGTLSLDDINGALEALGAEFESDLGFFQSNSEGALVDAIQQAPENYDGILINPAAYTHTSVALRDALAAIGLPFVEVHLSNIHRREEFRHHSYLAPLALGQICGFGLDSYLLGLRALFNHIKN.

Tyr-22 functions as the Proton acceptor in the catalytic mechanism. Positions 73, 79, and 86 each coordinate substrate. Catalysis depends on His-99, which acts as the Proton donor. Substrate-binding positions include 100–101 (LS) and Arg-110.

The protein belongs to the type-II 3-dehydroquinase family. As to quaternary structure, homododecamer.

It carries out the reaction 3-dehydroquinate = 3-dehydroshikimate + H2O. Its pathway is metabolic intermediate biosynthesis; chorismate biosynthesis; chorismate from D-erythrose 4-phosphate and phosphoenolpyruvate: step 3/7. Its function is as follows. Catalyzes a trans-dehydration via an enolate intermediate. In Trichlorobacter lovleyi (strain ATCC BAA-1151 / DSM 17278 / SZ) (Geobacter lovleyi), this protein is 3-dehydroquinate dehydratase.